A 1789-amino-acid polypeptide reads, in one-letter code: Protein sprint (1789 aa).

Disordered stretches follow at residues 53–120 (TTAN…AHPP), 140–190 (TTTA…DLAN), 218–237 (PLWN…HPTG), 261–317 (QRMH…QAGL), 329–378 (LNNN…DADD), and 401–460 (RRSR…PCDL). The span at 82–114 (SINNNKNNNISNKNNNNNNNNNNNINNNNNNNN) shows a compositional bias: low complexity. The span at 140-149 (TTTANQLQQQ) shows a compositional bias: polar residues. Positions 176–185 (PSEEDGDTDA) are enriched in acidic residues. Over residues 223–233 (RNGNGSTTTHC) the composition is skewed to polar residues. Residues 295–317 (NNNNINNNHNGQQSQKSQQQAGL) show a composition bias toward low complexity. Residues 337 to 361 (QPGSMTPASNRTGLDSNQNQKQNLN) are compositionally biased toward polar residues. Positions 409–418 (QSRTSLVSSS) are enriched in low complexity. A compositionally biased stretch (acidic residues) spans 428 to 445 (TSSEDDEEEPVEAEDEGE). The SH2 domain maps to 473–566 (WFLPGIQRSG…ELPVQLMLPR (94 aa)). Disordered regions lie at residues 632–689 (FFSD…SGGQ), 744–787 (TAPE…SANG), 852–918 (GECK…ILES), 969–1006 (DLLA…QSLL), 1040–1067 (AAED…QGSP), 1094–1123 (RSQM…MLQP), and 1138–1160 (PKPK…KRAR). Over residues 639–649 (KPPPTGAPPLP) the composition is skewed to pro residues. The segment covering 671–686 (TPSDTTNSSLSSFTTS) has biased composition (low complexity). A compositionally biased stretch (polar residues) spans 857-868 (TLSSQGSSSNDS). Residues 903–914 (AGKESQHYKESD) are compositionally biased toward basic and acidic residues. Low complexity predominate over residues 974-984 (TPSTPTPTQQS). 2 stretches are compositionally biased toward polar residues: residues 994-1006 (TATP…QSLL) and 1048-1065 (TTPT…SKQG). Positions 1143-1154 (SQQQQQSQQQQQ) are enriched in low complexity. The 143-residue stretch at 1531-1673 (RSEDIQLLAQ…LKTFMASEGE (143 aa)) folds into the VPS9 domain. In terms of domain architecture, Ras-associating spans 1689–1777 (CSSVLRVIIP…CMLAYKRIDA (89 aa)).

The protein belongs to the RIN (Ras interaction/interference) family. As to expression, in late cellular blastoderm embryos, it is expressed in the posterior end. Then, as development proceeds, it is expressed in the developing midgut, amnioserosa and in a specific subset of CNS neurons. Isoform 1 is expressed earlier in developing midgut and amnioserosa, but is not expressed in the CNS.

Its function is as follows. Potential Ras effector protein. May function as a guanine nucleotide exchange (GEF), by exchanging bound GDP for free GTP. This chain is Protein sprint (spri), found in Drosophila melanogaster (Fruit fly).